Reading from the N-terminus, the 1048-residue chain is Anguibactin system regulator (1048 aa).

In terms of domain architecture, Carrier spans 965 to 1039 (PIITASEDRV…AFAIIMDRCR (75 aa)).

Belongs to the ATP-dependent AMP-binding enzyme family.

The protein operates within siderophore biosynthesis; anguibactin biosynthesis. In terms of biological role, bifunctional protein that plays an essential role in virulence. Plays a role in both the production of the siderophore anguibactin and the regulation of iron transport genes. This chain is Anguibactin system regulator (angR), found in Vibrio anguillarum (Listonella anguillarum).